The following is a 644-amino-acid chain: Exoribonuclease 2 (644 aa).

Positions 189–516 (RQDLTALNFV…NHRLLKAVIK (328 aa)) constitute an RNB domain. Positions 561–643 (NTRFAAEIID…ETRSIIARPA (83 aa)) constitute an S1 motif domain.

This sequence belongs to the RNR ribonuclease family. RNase II subfamily.

The protein resides in the cytoplasm. It carries out the reaction Exonucleolytic cleavage in the 3'- to 5'-direction to yield nucleoside 5'-phosphates.. Involved in mRNA degradation. Hydrolyzes single-stranded polyribonucleotides processively in the 3' to 5' direction. This is Exoribonuclease 2 from Salmonella paratyphi B (strain ATCC BAA-1250 / SPB7).